A 502-amino-acid polypeptide reads, in one-letter code: Cardiolipin synthase (502 aa).

Transmembrane regions (helical) follow at residues 7 to 27, 29 to 49, and 59 to 79; these read VAIL…FWEG, LLGL…LVIS, and IAWL…YLLF. 2 consecutive PLD phosphodiesterase domains span residues 237–264 and 415–442; these read INFR…GDEY and EKGF…DMRS. Catalysis depends on residues histidine 242, lysine 244, aspartate 249, histidine 420, lysine 422, and aspartate 427.

It belongs to the phospholipase D family. Cardiolipin synthase subfamily.

Its subcellular location is the cell membrane. It catalyses the reaction 2 a 1,2-diacyl-sn-glycero-3-phospho-(1'-sn-glycerol) = a cardiolipin + glycerol. Catalyzes the reversible phosphatidyl group transfer from one phosphatidylglycerol molecule to another to form cardiolipin (CL) (diphosphatidylglycerol) and glycerol. The sequence is that of Cardiolipin synthase (cls) from Geobacillus kaustophilus (strain HTA426).